Consider the following 388-residue polypeptide: Pepsin A-3 (388 aa).

The signal sequence occupies residues 1-15; that stretch reads MKWLLLLGLVALSEC. A propeptide spans 16–62 (activation peptide); it reads IMYKVPLIRKKSLRRTLSERGLLKDFLKKHNLNPARKYFPQWKAPTL. Residues 76–385 enclose the Peptidase A1 domain; that stretch reads YFGTIGIGTP…DRANNQVGLA (310 aa). Asp94 is an active-site residue. 2 cysteine pairs are disulfide-bonded: Cys107/Cys112 and Cys268/Cys272. The active site involves Asp277. A disulfide bridge connects residues Cys311 and Cys344.

This sequence belongs to the peptidase A1 family.

The protein localises to the secreted. It carries out the reaction Preferential cleavage: hydrophobic, preferably aromatic, residues in P1 and P1' positions. Cleaves 1-Phe-|-Val-2, 4-Gln-|-His-5, 13-Glu-|-Ala-14, 14-Ala-|-Leu-15, 15-Leu-|-Tyr-16, 16-Tyr-|-Leu-17, 23-Gly-|-Phe-24, 24-Phe-|-Phe-25 and 25-Phe-|-Tyr-26 bonds in the B chain of insulin.. In terms of biological role, shows particularly broad specificity; although bonds involving phenylalanine and leucine are preferred, many others are also cleaved to some extent. The sequence is that of Pepsin A-3 (PGA3) from Homo sapiens (Human).